The following is a 320-amino-acid chain: rRNA 2'-O-methyltransferase fibrillarin 2 (320 aa).

The interval M1 to K79 is disordered. Composition is skewed to gly residues over residues G7–G44 and P57–G76. S-adenosyl-L-methionine is bound by residues T167 to T168, E186 to F187, D211 to A212, and D231 to Q234.

This sequence belongs to the methyltransferase superfamily. Fibrillarin family. As to quaternary structure, component of box C/D small nucleolar ribonucleoprotein (snoRNP) particles. Interacts with groundnut rosette virus long-distance movement protein; this interaction is required for virus long-distance movement protein transiting through host Cajal body and nucleolus, relocalization of fibrillarin to the cytoplasm, and in presence of viral RNA, leads to the formation of stable RNPs. Interacts (via GAR domain) with the hordeivirus TGB1 movement protein (via the first 82 amino acid residues). Interacts with PRMT11 and PRMT12. Interacts with MED19A. Post-translationally, methylated by PRMT11 and PRMT12. Expressed in roots and flowers. Expressed in leaves and stems. Expression levels decrease during aging.

Its subcellular location is the nucleus. It localises to the nucleolus. The catalysed reaction is a ribonucleotide in rRNA + S-adenosyl-L-methionine = a 2'-O-methylribonucleotide in rRNA + S-adenosyl-L-homocysteine + H(+). It catalyses the reaction L-glutaminyl-[histone H2A] + S-adenosyl-L-methionine = N(5)-methyl-L-glutaminyl-[histone H2A] + S-adenosyl-L-homocysteine + H(+). In terms of biological role, S-adenosyl-L-methionine-dependent methyltransferase that has the ability to methylate both RNAs and proteins. Involved in pre-rRNA processing. Utilizes the methyl donor S-adenosyl-L-methionine to catalyze the site-specific 2'-hydroxyl methylation of ribose moieties in pre-ribosomal RNA. Site specificity is provided by a guide RNA that base pairs with the substrate. Methylation occurs at a characteristic distance from the sequence involved in base pairing with the guide RNA. Also acts as a protein methyltransferase by mediating methylation of 'Gln-105' of histone H2A (H2AQ105me), a modification that impairs binding of the FACT complex and is specifically present at 35S ribosomal DNA locus. Acts as a negative regulator of expression of immune responsive genes, including pathogenesis-related gene 1 (PR1), and of resistance against bacterial pathogen. Binds to MED19A, a positive regulator of PR1 expression, to repress the activator activity of MED19A. In response to the bacterial pathogen-associated molecular pattern (PAMP) elf18, associates with the long non-coding RNA (lncRNA) ELENA1 (At4g16355), and releases its repression of MED19A. Possesses ribonuclease activity toward rRNA in vitro. Binds phosphoinositides, phospholipids and phosphatidic acid in vitro. The protein is rRNA 2'-O-methyltransferase fibrillarin 2 of Arabidopsis thaliana (Mouse-ear cress).